Here is a 138-residue protein sequence, read N- to C-terminus: uncharacterized protein (138 aa).

3 helical membrane passes run 12–32 (LHFLGFIGGIFAILGVIVLPI), 62–82 (LIAVPLFVLGYFISTIDFSVL), and 111–131 (FHWVASLPAWFITTVCALICS).

It is found in the cell membrane. This is an uncharacterized protein from Haemophilus influenzae (strain ATCC 51907 / DSM 11121 / KW20 / Rd).